The sequence spans 231 residues: Large ribosomal subunit protein uL1 (231 aa).

It belongs to the universal ribosomal protein uL1 family. In terms of assembly, part of the 50S ribosomal subunit.

Binds directly to 23S rRNA. The L1 stalk is quite mobile in the ribosome, and is involved in E site tRNA release. Its function is as follows. Protein L1 is also a translational repressor protein, it controls the translation of the L11 operon by binding to its mRNA. The sequence is that of Large ribosomal subunit protein uL1 from Ralstonia pickettii (strain 12J).